The following is a 371-amino-acid chain: Anhydro-N-acetylmuramic acid kinase (371 aa).

9 to 16 provides a ligand contact to ATP; it reads GTSMDGID.

This sequence belongs to the anhydro-N-acetylmuramic acid kinase family.

It catalyses the reaction 1,6-anhydro-N-acetyl-beta-muramate + ATP + H2O = N-acetyl-D-muramate 6-phosphate + ADP + H(+). It participates in amino-sugar metabolism; 1,6-anhydro-N-acetylmuramate degradation. The protein operates within cell wall biogenesis; peptidoglycan recycling. Catalyzes the specific phosphorylation of 1,6-anhydro-N-acetylmuramic acid (anhMurNAc) with the simultaneous cleavage of the 1,6-anhydro ring, generating MurNAc-6-P. Is required for the utilization of anhMurNAc either imported from the medium or derived from its own cell wall murein, and thus plays a role in cell wall recycling. In Azorhizobium caulinodans (strain ATCC 43989 / DSM 5975 / JCM 20966 / LMG 6465 / NBRC 14845 / NCIMB 13405 / ORS 571), this protein is Anhydro-N-acetylmuramic acid kinase.